A 263-amino-acid chain; its full sequence is 3'-5' ssDNA/RNA exonuclease TatD (263 aa).

A divalent metal cation-binding residues include glutamate 91, histidine 127, and histidine 152.

The protein belongs to the metallo-dependent hydrolases superfamily. TatD-type hydrolase family. TatD subfamily. As to quaternary structure, monomer. Requires Mg(2+) as cofactor.

The protein localises to the cytoplasm. In terms of biological role, 3'-5' exonuclease that prefers single-stranded DNA and RNA. May play a role in the H(2)O(2)-induced DNA damage repair. In Klebsiella pneumoniae (strain 342), this protein is 3'-5' ssDNA/RNA exonuclease TatD.